The primary structure comprises 441 residues: Homogentisate 1,2-dioxygenase (441 aa).

Residue His287 is the Proton acceptor of the active site. The Fe cation site is built by His330 and Glu336. 2 residues coordinate homogentisate: Tyr345 and His366. Residue His366 participates in Fe cation binding.

The protein belongs to the homogentisate dioxygenase family. As to quaternary structure, hexamer; dimer of trimers. It depends on Fe cation as a cofactor.

It carries out the reaction homogentisate + O2 = 4-maleylacetoacetate + H(+). Its pathway is amino-acid degradation; L-phenylalanine degradation; acetoacetate and fumarate from L-phenylalanine: step 4/6. Involved in the catabolism of homogentisate (2,5-dihydroxyphenylacetate or 2,5-OH-PhAc), a central intermediate in the degradation of phenylalanine and tyrosine. Catalyzes the oxidative ring cleavage of the aromatic ring of homogentisate to yield maleylacetoacetate. The protein is Homogentisate 1,2-dioxygenase of Xanthomonas oryzae pv. oryzae (strain KACC10331 / KXO85).